The following is a 734-amino-acid chain: Photosystem I P700 chlorophyll a apoprotein A2 (734 aa).

A run of 8 helical transmembrane segments spans residues 46 to 69 (IFAS…FHVA), 135 to 158 (LYTG…LHLQ), 175 to 199 (LNHH…HVAI), 273 to 291 (MAHH…GHMY), 330 to 353 (IHFQ…QHMY), 369 to 395 (AALY…IFFI), 417 to 439 (AIIS…LYVH), and 517 to 535 (FLVH…LILV). [4Fe-4S] cluster contacts are provided by cysteine 559 and cysteine 568. The next 2 membrane-spanning stretches (helical) occupy residues 575–596 (AFYL…YWHW) and 643–665 (LSVW…MFLI). Residues histidine 654, methionine 662, and tyrosine 670 each coordinate chlorophyll a. Tryptophan 671 serves as a coordination point for phylloquinone. A helical membrane pass occupies residues 707 to 727 (LVGLAHFSVGYIFTYAAFLIA).

The protein belongs to the PsaA/PsaB family. In terms of assembly, the PsaA/B heterodimer binds the P700 chlorophyll special pair and subsequent electron acceptors. PSI consists of a core antenna complex that captures photons, and an electron transfer chain that converts photonic excitation into a charge separation. The eukaryotic PSI reaction center is composed of at least 11 subunits. The cofactor is P700 is a chlorophyll a/chlorophyll a' dimer, A0 is one or more chlorophyll a, A1 is one or both phylloquinones and FX is a shared 4Fe-4S iron-sulfur center..

The protein resides in the plastid. It localises to the chloroplast thylakoid membrane. The catalysed reaction is reduced [plastocyanin] + hnu + oxidized [2Fe-2S]-[ferredoxin] = oxidized [plastocyanin] + reduced [2Fe-2S]-[ferredoxin]. PsaA and PsaB bind P700, the primary electron donor of photosystem I (PSI), as well as the electron acceptors A0, A1 and FX. PSI is a plastocyanin-ferredoxin oxidoreductase, converting photonic excitation into a charge separation, which transfers an electron from the donor P700 chlorophyll pair to the spectroscopically characterized acceptors A0, A1, FX, FA and FB in turn. Oxidized P700 is reduced on the lumenal side of the thylakoid membrane by plastocyanin. The polypeptide is Photosystem I P700 chlorophyll a apoprotein A2 (Arabidopsis thaliana (Mouse-ear cress)).